The primary structure comprises 387 residues: MATKKKTNFDDITKKYGAERDKALADALALIEKDFGKGSLMRLGEAANQKVSVVSSGSLALDIALGAGGYPKGRIVEIYGPESSGKTTVALHAVAAVQKEGGIAAFIDAENALDPEYAKALGVNIDELLLSQPDYGEQGLQIAEKLITSGAVDLVVIDSVAALVPKAEIDGEIGDSSVGLQARMMSQAMRKLAGHINKTKTTAIFINQLREKVGVMFGSPETTPGGRALKFYASVRLDVRGSTKIEEGSGDNKTQIGKITKIKVVKNKVAPPFKVALVDIMFGEGISRTGELLNIAVDEGIIKKSGAWFAYNDEKIGQGAEKAKNYLKEHQEIFDEIDHKVRTAHGLLDEAEVAETTEDTSTKAKATKAKKEEKVVETEEIELELED.

An ATP-binding site is contributed by 80–87 (GPESSGKT). The tract at residues 352–387 (EVAETTEDTSTKAKATKAKKEEKVVETEEIELELED) is disordered. Residues 378 to 387 (TEEIELELED) are compositionally biased toward acidic residues.

The protein belongs to the RecA family.

The protein resides in the cytoplasm. In terms of biological role, can catalyze the hydrolysis of ATP in the presence of single-stranded DNA, the ATP-dependent uptake of single-stranded DNA by duplex DNA, and the ATP-dependent hybridization of homologous single-stranded DNAs. It interacts with LexA causing its activation and leading to its autocatalytic cleavage. This Lactococcus lactis subsp. lactis (strain IL1403) (Streptococcus lactis) protein is Protein RecA, chromosomal.